Consider the following 574-residue polypeptide: MRWSNFYIPTLKEAPADAEVVSHKLLIRAGMIRKLTSGIYIYLPLGLRSIEKAASIVRQEMNSAGAQELLMPMVQPADLWQESGRWDFYGKELLRISDRHGRDYCLGPTHEEVITDLVRGEVRSYRQLPLNLYQIQTKFRDEIRPRFGLMRGREFMMKDAYSFDRDAQGLDLSYRAMYEAYMKIFSRMGLKFRAVEADSGSIGGSFSHEFMVLAETGEDTIAFCHDCDYSANVERAEVVCTLDECDAPVAGVEEVHTPDRHTVEEVCEFMNVPAAALIKTLLYVADGEPVAALVRGDRELNEAKLKNLLRADTLELASPEQVREWTGAPVGFAGPVGLGVKRLFADNELRLATDWITGANKADTHLRHVSLKRDTRLSGYADLRMITDKDPCPRCSGTLELTRGIEVGHVFKLGTKYSEAMGCKFLDENGKEQVMLMGCYGIGVSRVVAACIEQNSDENGIVFPPPIAPFEVLLLNLDGKNDDVNARVDELYGAVQAAGCDVLMDDRNERPGVKFKDADLIGVPMQLVVGGKGLARGIVEAKDRRTGEKTELPVDGFAQAFAAWRRQVLQGWGL.

Belongs to the class-II aminoacyl-tRNA synthetase family. ProS type 1 subfamily. Homodimer.

It localises to the cytoplasm. It carries out the reaction tRNA(Pro) + L-proline + ATP = L-prolyl-tRNA(Pro) + AMP + diphosphate. Its function is as follows. Catalyzes the attachment of proline to tRNA(Pro) in a two-step reaction: proline is first activated by ATP to form Pro-AMP and then transferred to the acceptor end of tRNA(Pro). As ProRS can inadvertently accommodate and process non-cognate amino acids such as alanine and cysteine, to avoid such errors it has two additional distinct editing activities against alanine. One activity is designated as 'pretransfer' editing and involves the tRNA(Pro)-independent hydrolysis of activated Ala-AMP. The other activity is designated 'posttransfer' editing and involves deacylation of mischarged Ala-tRNA(Pro). The misacylated Cys-tRNA(Pro) is not edited by ProRS. The sequence is that of Proline--tRNA ligase from Oleidesulfovibrio alaskensis (strain ATCC BAA-1058 / DSM 17464 / G20) (Desulfovibrio alaskensis).